Reading from the N-terminus, the 110-residue chain is Prothymosin alpha (110 aa).

Methionine 1 is subject to N-acetylmethionine. Positions 1–110 are disordered; sequence MSDAAVDTSS…TKKQKTDEDD (110 aa). Serine 2 is modified (N-acetylserine; in Prothymosin alpha, N-terminally processed). Serine 2 carries the post-translational modification Phosphoserine. Threonine 8 is subject to Phosphothreonine. Residues serine 9 and serine 10 each carry the phosphoserine modification. A phosphothreonine mark is found at threonine 13 and threonine 14. The span at 13-31 shows a compositional bias: basic and acidic residues; sequence TTKDLKEKKEVVEEAENGR. The residue at position 15 (lysine 15) is an N6-acetyllysine; alternate. Lysine 15 is subject to N6-succinyllysine; alternate. Residues 42–83 show a composition bias toward acidic residues; it reads ENGEQEADNEVDEEEEEGGEEEEEEEEGDGEEEDGDEDEEAE. A compositionally biased stretch (basic and acidic residues) spans 100–110; sequence DTKKQKTDEDD. Phosphothreonine is present on threonine 101. The residue at position 102 (lysine 102) is an N6-acetyllysine; alternate. Residue lysine 102 forms a Glycyl lysine isopeptide (Lys-Gly) (interchain with G-Cter in SUMO2); alternate linkage. Threonine 106 is modified (phosphothreonine).

It belongs to the pro/parathymosin family. Interacts with NUPR1; regulates apoptotic process. Post-translationally, covalently linked to a small RNA of about 20 nucleotides.

It localises to the nucleus. Prothymosin alpha may mediate immune function by conferring resistance to certain opportunistic infections. The sequence is that of Prothymosin alpha (PTMA) from Pongo abelii (Sumatran orangutan).